Here is a 510-residue protein sequence, read N- to C-terminus: NAD(P)H-quinone oxidoreductase subunit 2 A, chloroplastic (510 aa).

13 helical membrane-spanning segments follow: residues 24 to 44 (LLLF…GLIL), 57 to 77 (IPWL…ALLF), 99 to 119 (IFQF…VEYI), 124 to 144 (MAIT…MFLC), 149 to 169 (LITI…LSGY), 183 to 203 (YLLM…WLYG), 227 to 247 (PGIS…LSPA), 295 to 315 (WHLL…LIAI), 323 to 343 (MLAY…IVGD), 354 to 374 (YMLF…LFGL), 395 to 415 (ALSL…AGFF), 418 to 438 (LYLF…IGLL), and 484 to 504 (MIVC…IIAI).

It belongs to the complex I subunit 2 family. In terms of assembly, NDH is composed of at least 16 different subunits, 5 of which are encoded in the nucleus.

Its subcellular location is the plastid. It is found in the chloroplast thylakoid membrane. The enzyme catalyses a plastoquinone + NADH + (n+1) H(+)(in) = a plastoquinol + NAD(+) + n H(+)(out). It catalyses the reaction a plastoquinone + NADPH + (n+1) H(+)(in) = a plastoquinol + NADP(+) + n H(+)(out). NDH shuttles electrons from NAD(P)H:plastoquinone, via FMN and iron-sulfur (Fe-S) centers, to quinones in the photosynthetic chain and possibly in a chloroplast respiratory chain. The immediate electron acceptor for the enzyme in this species is believed to be plastoquinone. Couples the redox reaction to proton translocation, and thus conserves the redox energy in a proton gradient. The polypeptide is NAD(P)H-quinone oxidoreductase subunit 2 A, chloroplastic (Solanum lycopersicum (Tomato)).